A 1060-amino-acid polypeptide reads, in one-letter code: Carbamoyl phosphate synthase large chain (1060 aa).

Residues 1-401 (MPKRQDIHKI…SLLKAVRSLE (401 aa)) form a carboxyphosphate synthetic domain region. ATP contacts are provided by arginine 129, arginine 169, glycine 175, glycine 176, arginine 208, isoleucine 210, glutamate 215, glycine 241, valine 242, histidine 243, glutamine 284, and glutamate 298. One can recognise an ATP-grasp 1 domain in the interval 133-327 (KNLMQKLHEP…IAKMAAKIAV (195 aa)). Mg(2+) is bound by residues glutamine 284, glutamate 298, and asparagine 300. Mn(2+) contacts are provided by glutamine 284, glutamate 298, and asparagine 300. Positions 402-546 (VGLIHPERPA…YSTYESSTES (145 aa)) are oligomerization domain. The interval 547-929 (VKSDKPSVLV…ALYKAFEAAG (383 aa)) is carbamoyl phosphate synthetic domain. Residues 671 to 861 (DQVIKSLKLP…LAQVATLAIL (191 aa)) enclose the ATP-grasp 2 domain. Positions 707, 746, 748, 752, 777, 778, 779, 780, 820, and 832 each coordinate ATP. Mg(2+)-binding residues include glutamine 820, glutamate 832, and asparagine 834. Glutamine 820, glutamate 832, and asparagine 834 together coordinate Mn(2+). The MGS-like domain occupies 930-1060 (MHLPQFGRAL…QAFSISPIKS (131 aa)). Residues 930 to 1060 (MHLPQFGRAL…QAFSISPIKS (131 aa)) form an allosteric domain region.

It belongs to the CarB family. Composed of two chains; the small (or glutamine) chain promotes the hydrolysis of glutamine to ammonia, which is used by the large (or ammonia) chain to synthesize carbamoyl phosphate. Tetramer of heterodimers (alpha,beta)4. Mg(2+) is required as a cofactor. Mn(2+) serves as cofactor.

It carries out the reaction hydrogencarbonate + L-glutamine + 2 ATP + H2O = carbamoyl phosphate + L-glutamate + 2 ADP + phosphate + 2 H(+). The catalysed reaction is hydrogencarbonate + NH4(+) + 2 ATP = carbamoyl phosphate + 2 ADP + phosphate + 2 H(+). It functions in the pathway amino-acid biosynthesis; L-arginine biosynthesis; carbamoyl phosphate from bicarbonate: step 1/1. It participates in pyrimidine metabolism; UMP biosynthesis via de novo pathway; (S)-dihydroorotate from bicarbonate: step 1/3. Functionally, large subunit of the glutamine-dependent carbamoyl phosphate synthetase (CPSase). CPSase catalyzes the formation of carbamoyl phosphate from the ammonia moiety of glutamine, carbonate, and phosphate donated by ATP, constituting the first step of 2 biosynthetic pathways, one leading to arginine and/or urea and the other to pyrimidine nucleotides. The large subunit (synthetase) binds the substrates ammonia (free or transferred from glutamine from the small subunit), hydrogencarbonate and ATP and carries out an ATP-coupled ligase reaction, activating hydrogencarbonate by forming carboxy phosphate which reacts with ammonia to form carbamoyl phosphate. The chain is Carbamoyl phosphate synthase large chain from Lacticaseibacillus paracasei (strain ATCC 334 / BCRC 17002 / CCUG 31169 / CIP 107868 / KCTC 3260 / NRRL B-441) (Lactobacillus paracasei).